Here is a 233-residue protein sequence, read N- to C-terminus: Orotidine 5'-phosphate decarboxylase (233 aa).

Residues Asp11, Lys34, 61 to 70 (DLKLHDIPNT), Thr117, Arg179, Gln189, Gly209, and Arg210 contribute to the substrate site. Lys63 acts as the Proton donor in catalysis.

It belongs to the OMP decarboxylase family. Type 1 subfamily. Homodimer.

The enzyme catalyses orotidine 5'-phosphate + H(+) = UMP + CO2. Its pathway is pyrimidine metabolism; UMP biosynthesis via de novo pathway; UMP from orotate: step 2/2. Its function is as follows. Catalyzes the decarboxylation of orotidine 5'-monophosphate (OMP) to uridine 5'-monophosphate (UMP). The polypeptide is Orotidine 5'-phosphate decarboxylase (Streptococcus agalactiae serotype Ia (strain ATCC 27591 / A909 / CDC SS700)).